The sequence spans 341 residues: uncharacterized protein (341 aa).

Catalysis depends on residues S111, D247, and H275.

This sequence belongs to the DmpD/TodF/XylF esterase family.

This is an uncharacterized protein from Mycobacterium bovis (strain ATCC BAA-935 / AF2122/97).